Reading from the N-terminus, the 293-residue chain is Ribosomal RNA small subunit methyltransferase H (293 aa).

Residues 32–34 (GGH), Asp51, Phe78, Asp99, and Gln106 contribute to the S-adenosyl-L-methionine site. A disordered region spans residues 272–293 (SDEEIKENPASRSAKLRVGRRI).

Belongs to the methyltransferase superfamily. RsmH family.

The protein localises to the cytoplasm. It carries out the reaction cytidine(1402) in 16S rRNA + S-adenosyl-L-methionine = N(4)-methylcytidine(1402) in 16S rRNA + S-adenosyl-L-homocysteine + H(+). Its function is as follows. Specifically methylates the N4 position of cytidine in position 1402 (C1402) of 16S rRNA. The chain is Ribosomal RNA small subunit methyltransferase H from Sulfurihydrogenibium sp. (strain YO3AOP1).